A 365-amino-acid chain; its full sequence is 2-aminoethylphosphonate--pyruvate transaminase (365 aa).

At Lys-194 the chain carries N6-(pyridoxal phosphate)lysine.

Belongs to the class-V pyridoxal-phosphate-dependent aminotransferase family. PhnW subfamily. In terms of assembly, homodimer. Requires pyridoxal 5'-phosphate as cofactor.

It catalyses the reaction (2-aminoethyl)phosphonate + pyruvate = phosphonoacetaldehyde + L-alanine. Its function is as follows. Involved in phosphonate degradation. This Bacillus cereus (strain ZK / E33L) protein is 2-aminoethylphosphonate--pyruvate transaminase.